The primary structure comprises 69 residues: DNA-directed RNA polymerase subunit epsilon (69 aa).

The protein belongs to the RNA polymerase subunit epsilon family. RNAP is composed of a core of 2 alpha, a beta and a beta' subunit. The core is associated with a delta subunit, and at least one of epsilon or omega. When a sigma factor is associated with the core the holoenzyme is formed, which can initiate transcription.

The catalysed reaction is RNA(n) + a ribonucleoside 5'-triphosphate = RNA(n+1) + diphosphate. In terms of biological role, a non-essential component of RNA polymerase (RNAP). The sequence is that of DNA-directed RNA polymerase subunit epsilon from Listeria welshimeri serovar 6b (strain ATCC 35897 / DSM 20650 / CCUG 15529 / CIP 8149 / NCTC 11857 / SLCC 5334 / V8).